The following is a 1385-amino-acid chain: DNA-directed RNA polymerase subunit beta (1385 aa).

This sequence belongs to the RNA polymerase beta chain family. As to quaternary structure, the RNAP catalytic core consists of 2 alpha, 1 beta, 1 beta' and 1 omega subunit. When a sigma factor is associated with the core the holoenzyme is formed, which can initiate transcription.

It carries out the reaction RNA(n) + a ribonucleoside 5'-triphosphate = RNA(n+1) + diphosphate. In terms of biological role, DNA-dependent RNA polymerase catalyzes the transcription of DNA into RNA using the four ribonucleoside triphosphates as substrates. The chain is DNA-directed RNA polymerase subunit beta from Jannaschia sp. (strain CCS1).